The primary structure comprises 295 residues: Phosphatidylserine decarboxylase proenzyme (295 aa).

Active-site charge relay system; for autoendoproteolytic cleavage activity residues include Asp-90, His-147, and Ser-254. Ser-254 acts as the Schiff-base intermediate with substrate; via pyruvic acid; for decarboxylase activity in catalysis. Ser-254 bears the Pyruvic acid (Ser); by autocatalysis mark.

This sequence belongs to the phosphatidylserine decarboxylase family. PSD-B subfamily. Prokaryotic type I sub-subfamily. In terms of assembly, heterodimer of a large membrane-associated beta subunit and a small pyruvoyl-containing alpha subunit. It depends on pyruvate as a cofactor. Post-translationally, is synthesized initially as an inactive proenzyme. Formation of the active enzyme involves a self-maturation process in which the active site pyruvoyl group is generated from an internal serine residue via an autocatalytic post-translational modification. Two non-identical subunits are generated from the proenzyme in this reaction, and the pyruvate is formed at the N-terminus of the alpha chain, which is derived from the carboxyl end of the proenzyme. The autoendoproteolytic cleavage occurs by a canonical serine protease mechanism, in which the side chain hydroxyl group of the serine supplies its oxygen atom to form the C-terminus of the beta chain, while the remainder of the serine residue undergoes an oxidative deamination to produce ammonia and the pyruvoyl prosthetic group on the alpha chain. During this reaction, the Ser that is part of the protease active site of the proenzyme becomes the pyruvoyl prosthetic group, which constitutes an essential element of the active site of the mature decarboxylase.

It is found in the cell membrane. The enzyme catalyses a 1,2-diacyl-sn-glycero-3-phospho-L-serine + H(+) = a 1,2-diacyl-sn-glycero-3-phosphoethanolamine + CO2. Its pathway is phospholipid metabolism; phosphatidylethanolamine biosynthesis; phosphatidylethanolamine from CDP-diacylglycerol: step 2/2. In terms of biological role, catalyzes the formation of phosphatidylethanolamine (PtdEtn) from phosphatidylserine (PtdSer). This Sodalis glossinidius (strain morsitans) protein is Phosphatidylserine decarboxylase proenzyme.